The following is a 309-amino-acid chain: MEDEDCYEDWMSKMPSHMWDIPLWNLAIPGSHDSMTYCLDKQSSVSNSTPRVVQVLDKYFPCIVRPCIMKWATTQEGAISNQLDLGIRFLDLRIAHKIKDPDEVFYFAHGVYSLLTVKEALTEVVRWLDQHIKEVVIIALSNFEGMNLDQHKDLIQFLIATFNKKICPKSVTPSLQECWNHSYQVILSYDDESSTGYVELWPQCPYWWANKSDPNLVISYLEDQKNEGRPSQFFAAGLNLTEDARYVLCHPCQSLQSMTRRSYSLLMKWVKQQRPGSGQACLNIICADFVGIFGSESTQLVIGLNQIEA.

The PI-PLC X-box domain maps to 17–193 (HMWDIPLWNL…QVILSYDDES (177 aa)).

The chain is PI-PLC X domain-containing protein 1 (plcxd1) from Danio rerio (Zebrafish).